A 93-amino-acid polypeptide reads, in one-letter code: Large ribosomal subunit protein uL23cz/uL23cy (93 aa).

This sequence belongs to the universal ribosomal protein uL23 family. As to quaternary structure, part of the 50S ribosomal subunit.

The protein localises to the plastid. Its subcellular location is the chloroplast. In terms of biological role, binds to 23S rRNA. The chain is Large ribosomal subunit protein uL23cz/uL23cy (rpl23-A) from Nymphaea alba (White water-lily).